The following is a 291-amino-acid chain: 4-hydroxy-tetrahydrodipicolinate synthase (291 aa).

Threonine 47 is a pyruvate binding site. The active-site Proton donor/acceptor is the tyrosine 134. Catalysis depends on lysine 162, which acts as the Schiff-base intermediate with substrate. Position 205 (isoleucine 205) interacts with pyruvate.

The protein belongs to the DapA family. Homotetramer; dimer of dimers.

It localises to the cytoplasm. The enzyme catalyses L-aspartate 4-semialdehyde + pyruvate = (2S,4S)-4-hydroxy-2,3,4,5-tetrahydrodipicolinate + H2O + H(+). It participates in amino-acid biosynthesis; L-lysine biosynthesis via DAP pathway; (S)-tetrahydrodipicolinate from L-aspartate: step 3/4. Functionally, catalyzes the condensation of (S)-aspartate-beta-semialdehyde [(S)-ASA] and pyruvate to 4-hydroxy-tetrahydrodipicolinate (HTPA). The chain is 4-hydroxy-tetrahydrodipicolinate synthase from Methanoculleus marisnigri (strain ATCC 35101 / DSM 1498 / JR1).